The sequence spans 500 residues: NAD(P)H-quinone oxidoreductase chain 4, chloroplastic (500 aa).

14 helical membrane-spanning segments follow: residues 4–24 (FPWL…MLFL), 35–55 (YTIC…CYNF), 87–107 (IGTI…AFPV), 113–130 (LFHF…GSFS), 134–154 (LLLF…LLAM), 167–187 (FILY…GLSL), 211–231 (ILFY…IPLH), 242–262 (HYST…YGLV), 272–292 (AHSM…IYAA), 305–325 (IAYS…SITD), 330–350 (GAIL…FLAG), 386–406 (LALP…GIIT), 416–436 (ILII…LLSM), and 462–482 (LFLS…PDFV).

This sequence belongs to the complex I subunit 4 family.

Its subcellular location is the plastid. The protein resides in the chloroplast thylakoid membrane. It catalyses the reaction a plastoquinone + NADH + (n+1) H(+)(in) = a plastoquinol + NAD(+) + n H(+)(out). The enzyme catalyses a plastoquinone + NADPH + (n+1) H(+)(in) = a plastoquinol + NADP(+) + n H(+)(out). The protein is NAD(P)H-quinone oxidoreductase chain 4, chloroplastic of Lepidium virginicum (Virginia pepperweed).